A 190-amino-acid chain; its full sequence is Elongation factor P-like protein (190 aa).

The protein belongs to the elongation factor P family.

This Cronobacter sakazakii (strain ATCC BAA-894) (Enterobacter sakazakii) protein is Elongation factor P-like protein.